The primary structure comprises 313 residues: Protein-methionine-sulfoxide reductase catalytic subunit MsrP (313 aa).

The tat-type signal signal peptide spans 1–46; it reads MPSYRAPKIAAAEITPERFFLDRRTFIAAAAGSLALSVPKPSRAAA. Mo-molybdopterin is bound by residues Asn70, 73–74, Cys127, Thr162, Asn212, Arg217, and 228–230; these read YE and GIK.

It belongs to the MsrP family. In terms of assembly, heterodimer of a catalytic subunit (MsrP) and a heme-binding subunit (MsrQ). The cofactor is Mo-molybdopterin. Post-translationally, predicted to be exported by the Tat system. The position of the signal peptide cleavage has not been experimentally proven.

The protein resides in the periplasm. The enzyme catalyses L-methionyl-[protein] + a quinone + H2O = L-methionyl-(S)-S-oxide-[protein] + a quinol. It catalyses the reaction L-methionyl-[protein] + a quinone + H2O = L-methionyl-(R)-S-oxide-[protein] + a quinol. In terms of biological role, part of the MsrPQ system that repairs oxidized periplasmic proteins containing methionine sulfoxide residues (Met-O), using respiratory chain electrons. Thus protects these proteins from oxidative-stress damage caused by reactive species of oxygen and chlorine generated by the host defense mechanisms. MsrPQ is essential for the maintenance of envelope integrity under bleach stress, rescuing a wide series of structurally unrelated periplasmic proteins from methionine oxidation. The catalytic subunit MsrP is non-stereospecific, being able to reduce both (R-) and (S-) diastereoisomers of methionine sulfoxide. In Rhizobium meliloti (strain 1021) (Ensifer meliloti), this protein is Protein-methionine-sulfoxide reductase catalytic subunit MsrP.